A 147-amino-acid polypeptide reads, in one-letter code: Myoglobin (147 aa).

Residues 2–141 (ADFDAVLKCW…VIADLEANYK (140 aa)) enclose the Globin domain. Residue histidine 60 participates in nitrite binding. Histidine 60 is a binding site for O2. Histidine 89 provides a ligand contact to heme b.

This sequence belongs to the globin family. As to quaternary structure, monomeric.

It is found in the cytoplasm. It localises to the sarcoplasm. It carries out the reaction Fe(III)-heme b-[protein] + nitric oxide + H2O = Fe(II)-heme b-[protein] + nitrite + 2 H(+). The enzyme catalyses H2O2 + AH2 = A + 2 H2O. In terms of biological role, monomeric heme protein which primary function is to store oxygen and facilitate its diffusion within muscle tissues. Reversibly binds oxygen through a pentacoordinated heme iron and enables its timely and efficient release as needed during periods of heightened demand. Depending on the oxidative conditions of tissues and cells, and in addition to its ability to bind oxygen, it also has a nitrite reductase activity whereby it regulates the production of bioactive nitric oxide. Under stress conditions, like hypoxia and anoxia, it also protects cells against reactive oxygen species thanks to its pseudoperoxidase activity. The protein is Myoglobin (mb) of Auxis rochei (Bullet tuna).